The primary structure comprises 683 residues: Methionine--tRNA ligase (683 aa).

Residues 15-25 carry the 'HIGH' region motif; the sequence is PYANGSIHLGH. Residues C146, C149, C159, and C162 each contribute to the Zn(2+) site. The 'KMSKS' region motif lies at 332–336; the sequence is KMSKS. Residue K335 participates in ATP binding. The region spanning 582–683 is the tRNA-binding domain; the sequence is DFAKVDLRIA…QGAQAGMRVM (102 aa).

This sequence belongs to the class-I aminoacyl-tRNA synthetase family. MetG type 1 subfamily. As to quaternary structure, homodimer. Requires Zn(2+) as cofactor.

The protein localises to the cytoplasm. It catalyses the reaction tRNA(Met) + L-methionine + ATP = L-methionyl-tRNA(Met) + AMP + diphosphate. Functionally, is required not only for elongation of protein synthesis but also for the initiation of all mRNA translation through initiator tRNA(fMet) aminoacylation. The polypeptide is Methionine--tRNA ligase (Vibrio cholerae serotype O1 (strain ATCC 39541 / Classical Ogawa 395 / O395)).